Consider the following 161-residue polypeptide: Vasotocin-neurophysin VT (161 aa).

The N-terminal stretch at 1 to 22 (MSAMGWTLLAAALLAISAQSNG) is a signal peptide. A disulfide bridge connects residues cysteine 23 and cysteine 28. Glycine 31 is subject to Glycine amide. 7 disulfide bridges follow: cysteine 43–cysteine 91, cysteine 46–cysteine 58, cysteine 52–cysteine 81, cysteine 59–cysteine 71, cysteine 99–cysteine 111, cysteine 105–cysteine 123, and cysteine 112–cysteine 117.

The protein belongs to the vasopressin/oxytocin family.

It is found in the secreted. Vasotocin is an antidiuretic hormone. The chain is Vasotocin-neurophysin VT from Eptatretus stoutii (Pacific hagfish).